Here is a 60-residue protein sequence, read N- to C-terminus: MDPCECSKSGTCNCGGSCTCTNCSCKSCKKSCCPCCPSGCTKCASGCVCKGKTCDTSCCQ.

Residues 1 to 28 (MDPCECSKSGTCNCGGSCTCTNCSCKSC) are beta. A divalent metal cation is bound by residues C4, C6, C12, C14, C18, C20, C23, C25, C28, C32, C33, C35, C36, C40, C43, C47, C49, C54, C58, and C59. Residues 29 to 60 (KKSCCPCCPSGCTKCASGCVCKGKTCDTSCCQ) are alpha.

This sequence belongs to the metallothionein superfamily. Type 1 family.

In terms of biological role, metallothioneins have a high content of cysteine residues that bind various heavy metals. The chain is Metallothionein A (mta) from Chionodraco rastrospinosus (Ocellated icefish).